Consider the following 1152-residue polypeptide: ATP-dependent helicase/deoxyribonuclease subunit B (1152 aa).

The UvrD-like helicase ATP-binding domain occupies 1 to 338 (MSIRFIYGRA…LVRDRNYRFR (338 aa)). Position 8 to 15 (8 to 15 (GRAGSGKS)) interacts with ATP. The UvrD-like helicase C-terminal domain occupies 276-579 (PYRFKNSEEL…NVGDIARIKG (304 aa)). Residues Cys-785, Cys-1106, Cys-1109, and Cys-1115 each contribute to the [4Fe-4S] cluster site.

This sequence belongs to the helicase family. AddB/RexB type 1 subfamily. As to quaternary structure, heterodimer of AddA and AddB. Mg(2+) is required as a cofactor. [4Fe-4S] cluster serves as cofactor.

In terms of biological role, the heterodimer acts as both an ATP-dependent DNA helicase and an ATP-dependent, dual-direction single-stranded exonuclease. Recognizes the chi site generating a DNA molecule suitable for the initiation of homologous recombination. The AddB subunit has 5' -&gt; 3' nuclease activity but not helicase activity. This Clostridium botulinum (strain Alaska E43 / Type E3) protein is ATP-dependent helicase/deoxyribonuclease subunit B.